The sequence spans 144 residues: D-aminoacyl-tRNA deacylase (144 aa).

The short motif at 136-137 (GP) is the Gly-cisPro motif, important for rejection of L-amino acids element.

This sequence belongs to the DTD family. In terms of assembly, homodimer.

The protein localises to the cytoplasm. It carries out the reaction glycyl-tRNA(Ala) + H2O = tRNA(Ala) + glycine + H(+). The enzyme catalyses a D-aminoacyl-tRNA + H2O = a tRNA + a D-alpha-amino acid + H(+). An aminoacyl-tRNA editing enzyme that deacylates mischarged D-aminoacyl-tRNAs. Also deacylates mischarged glycyl-tRNA(Ala), protecting cells against glycine mischarging by AlaRS. Acts via tRNA-based rather than protein-based catalysis; rejects L-amino acids rather than detecting D-amino acids in the active site. By recycling D-aminoacyl-tRNA to D-amino acids and free tRNA molecules, this enzyme counteracts the toxicity associated with the formation of D-aminoacyl-tRNA entities in vivo and helps enforce protein L-homochirality. In Corynebacterium efficiens (strain DSM 44549 / YS-314 / AJ 12310 / JCM 11189 / NBRC 100395), this protein is D-aminoacyl-tRNA deacylase.